Consider the following 1342-residue polypeptide: DNA-directed RNA polymerase subunit beta (1342 aa).

The protein belongs to the RNA polymerase beta chain family. In terms of assembly, the RNAP catalytic core consists of 2 alpha, 1 beta, 1 beta' and 1 omega subunit. When a sigma factor is associated with the core the holoenzyme is formed, which can initiate transcription.

The enzyme catalyses RNA(n) + a ribonucleoside 5'-triphosphate = RNA(n+1) + diphosphate. Its function is as follows. DNA-dependent RNA polymerase catalyzes the transcription of DNA into RNA using the four ribonucleoside triphosphates as substrates. This Vibrio vulnificus (strain CMCP6) protein is DNA-directed RNA polymerase subunit beta.